We begin with the raw amino-acid sequence, 268 residues long: Deoxyuridine 5'-triphosphate nucleotidohydrolase (268 aa).

Substrate contacts are provided by residues 172 to 174 (RSS) and 263 to 264 (FG).

This sequence belongs to the dUTPase family. Requires Mg(2+) as cofactor.

It carries out the reaction dUTP + H2O = dUMP + diphosphate + H(+). In terms of biological role, involved in nucleotide metabolism: produces dUMP, the immediate precursor of thymidine nucleotides and decreases the intracellular concentration of dUTP to avoid uracil incorporation into viral DNA. This chain is Deoxyuridine 5'-triphosphate nucleotidohydrolase, found in Suid herpesvirus 1 (strain Kaplan) (SuHV-1).